The sequence spans 229 residues: Peptidase E (229 aa).

Residues Ser-120, Asp-135, and His-157 each act as charge relay system in the active site.

The protein belongs to the peptidase S51 family.

Its subcellular location is the cytoplasm. It catalyses the reaction Dipeptidase E catalyzes the hydrolysis of dipeptides Asp-|-Xaa. It does not act on peptides with N-terminal Glu, Asn or Gln, nor does it cleave isoaspartyl peptides.. Its function is as follows. Hydrolyzes dipeptides containing N-terminal aspartate residues. May play a role in allowing the cell to use peptide aspartate to spare carbon otherwise required for the synthesis of the aspartate family of amino acids. The polypeptide is Peptidase E (Salmonella paratyphi C (strain RKS4594)).